A 100-amino-acid chain; its full sequence is Small ribosomal subunit protein uS14c (100 aa).

This sequence belongs to the universal ribosomal protein uS14 family. In terms of assembly, component of the chloroplast small ribosomal subunit (SSU). Mature 70S chloroplast ribosomes of higher plants consist of a small (30S) and a large (50S) subunit. The 30S small subunit contains 1 molecule of ribosomal RNA (16S rRNA) and 24 different proteins. The 50S large subunit contains 3 rRNA molecules (23S, 5S and 4.5S rRNA) and 33 different proteins.

The protein resides in the plastid. Its subcellular location is the chloroplast. Component of the chloroplast ribosome (chloro-ribosome), a dedicated translation machinery responsible for the synthesis of chloroplast genome-encoded proteins, including proteins of the transcription and translation machinery and components of the photosynthetic apparatus. In Spinacia oleracea (Spinach), this protein is Small ribosomal subunit protein uS14c.